Reading from the N-terminus, the 338-residue chain is MERLLDNKFSIEDVHEESLRPKTLEEYIGQQKVKEKIKIFIEAAKKRKEPLDHVLLYGPPGLGKTTLANIIANEMGVDIKITSGPAIERAGDLVAILTNIGENNILFIDEIHRLNRTIEEVLYPAMEDKKVDIVIGKGPSAKTIRLTLPPFTLIGATTRAGLLSSPLRDRFGIIERLDYYTVEELSQIVMRSASILKCDIEKEACIEIAKRSRGTPRVANRLLRRLRDYAMVKHTGSITYEVAKSGLEMFEVDEYGLDLVDRNILEAIVYKFGGGPVGLSTIAAAISEDEGTIEDIYEPYLIQEGFLVKTARGRVATQKAISHIAKIKFKLKESGDNR.

A large ATPase domain (RuvB-L) region spans residues Met-1–Tyr-180. Residues Leu-19, Arg-20, Gly-61, Lys-64, Thr-65, Thr-66, Arg-170, Tyr-180, and Arg-217 each coordinate ATP. Residue Thr-65 participates in Mg(2+) binding. Positions Thr-181–Glu-251 are small ATPAse domain (RuvB-S). Residues Glu-254–Arg-338 are head domain (RuvB-H). Lys-309 and Arg-314 together coordinate DNA.

The protein belongs to the RuvB family. As to quaternary structure, homohexamer. Forms an RuvA(8)-RuvB(12)-Holliday junction (HJ) complex. HJ DNA is sandwiched between 2 RuvA tetramers; dsDNA enters through RuvA and exits via RuvB. An RuvB hexamer assembles on each DNA strand where it exits the tetramer. Each RuvB hexamer is contacted by two RuvA subunits (via domain III) on 2 adjacent RuvB subunits; this complex drives branch migration. In the full resolvosome a probable DNA-RuvA(4)-RuvB(12)-RuvC(2) complex forms which resolves the HJ.

It localises to the cytoplasm. It carries out the reaction ATP + H2O = ADP + phosphate + H(+). Its function is as follows. The RuvA-RuvB-RuvC complex processes Holliday junction (HJ) DNA during genetic recombination and DNA repair, while the RuvA-RuvB complex plays an important role in the rescue of blocked DNA replication forks via replication fork reversal (RFR). RuvA specifically binds to HJ cruciform DNA, conferring on it an open structure. The RuvB hexamer acts as an ATP-dependent pump, pulling dsDNA into and through the RuvAB complex. RuvB forms 2 homohexamers on either side of HJ DNA bound by 1 or 2 RuvA tetramers; 4 subunits per hexamer contact DNA at a time. Coordinated motions by a converter formed by DNA-disengaged RuvB subunits stimulates ATP hydrolysis and nucleotide exchange. Immobilization of the converter enables RuvB to convert the ATP-contained energy into a lever motion, pulling 2 nucleotides of DNA out of the RuvA tetramer per ATP hydrolyzed, thus driving DNA branch migration. The RuvB motors rotate together with the DNA substrate, which together with the progressing nucleotide cycle form the mechanistic basis for DNA recombination by continuous HJ branch migration. Branch migration allows RuvC to scan DNA until it finds its consensus sequence, where it cleaves and resolves cruciform DNA. The sequence is that of Holliday junction branch migration complex subunit RuvB from Caldicellulosiruptor bescii (strain ATCC BAA-1888 / DSM 6725 / KCTC 15123 / Z-1320) (Anaerocellum thermophilum).